The following is a 266-amino-acid chain: ATP synthase subunit a (266 aa).

6 helical membrane passes run 38-58 (KQML…VLAA), 99-119 (LLFS…IPLI), 126-146 (HVGG…AIGI), 162-182 (GVPW…NFVV), 191-211 (LFAT…GIEY), and 224-244 (SVLV…IMVL).

Belongs to the ATPase A chain family. F-type ATPases have 2 components, CF(1) - the catalytic core - and CF(0) - the membrane proton channel. CF(1) has five subunits: alpha(3), beta(3), gamma(1), delta(1), epsilon(1). CF(0) has three main subunits: a(1), b(2) and c(9-12). The alpha and beta chains form an alternating ring which encloses part of the gamma chain. CF(1) is attached to CF(0) by a central stalk formed by the gamma and epsilon chains, while a peripheral stalk is formed by the delta and b chains.

It is found in the cell membrane. Key component of the proton channel; it plays a direct role in the translocation of protons across the membrane. This Pseudarthrobacter chlorophenolicus (strain ATCC 700700 / DSM 12829 / CIP 107037 / JCM 12360 / KCTC 9906 / NCIMB 13794 / A6) (Arthrobacter chlorophenolicus) protein is ATP synthase subunit a.